The sequence spans 72 residues: Prokaryotic ubiquitin-like protein Pup (72 aa).

The segment covering Met1–Gln10 has biased composition (gly residues). The segment at Met1–Ser41 is disordered. Positions Asp27 to Glu61 form a coiled coil. An ARC ATPase binding region spans residues Thr28–Tyr66. Residues Asp32–Ser41 are compositionally biased toward basic and acidic residues. Gln72 is modified (deamidated glutamine). An Isoglutamyl lysine isopeptide (Gln-Lys) (interchain with K-? in acceptor proteins) cross-link involves residue Gln72.

It belongs to the prokaryotic ubiquitin-like protein family. Strongly interacts with the proteasome-associated ATPase ARC through a hydrophobic interface; the interacting region of Pup lies in its C-terminal half. There is one Pup binding site per ARC hexamer ring. Post-translationally, is modified by deamidation of its C-terminal glutamine to glutamate by the deamidase Dop, a prerequisite to the subsequent pupylation process.

The protein operates within protein degradation; proteasomal Pup-dependent pathway. Protein modifier that is covalently attached to lysine residues of substrate proteins, thereby targeting them for proteasomal degradation. The tagging system is termed pupylation. The polypeptide is Prokaryotic ubiquitin-like protein Pup (Frankia casuarinae (strain DSM 45818 / CECT 9043 / HFP020203 / CcI3)).